Here is a 346-residue protein sequence, read N- to C-terminus: Phosphoribosylformylglycinamidine cyclo-ligase (346 aa).

This sequence belongs to the AIR synthase family.

The protein localises to the cytoplasm. The enzyme catalyses 2-formamido-N(1)-(5-O-phospho-beta-D-ribosyl)acetamidine + ATP = 5-amino-1-(5-phospho-beta-D-ribosyl)imidazole + ADP + phosphate + H(+). It functions in the pathway purine metabolism; IMP biosynthesis via de novo pathway; 5-amino-1-(5-phospho-D-ribosyl)imidazole from N(2)-formyl-N(1)-(5-phospho-D-ribosyl)glycinamide: step 2/2. The polypeptide is Phosphoribosylformylglycinamidine cyclo-ligase (Bacillus licheniformis (strain ATCC 14580 / DSM 13 / JCM 2505 / CCUG 7422 / NBRC 12200 / NCIMB 9375 / NCTC 10341 / NRRL NRS-1264 / Gibson 46)).